We begin with the raw amino-acid sequence, 70 residues long: DNA-directed RNA polymerase subunit omega (70 aa).

Belongs to the RNA polymerase subunit omega family. The RNAP catalytic core consists of 2 alpha, 1 beta, 1 beta' and 1 omega subunit. When a sigma factor is associated with the core the holoenzyme is formed, which can initiate transcription.

It catalyses the reaction RNA(n) + a ribonucleoside 5'-triphosphate = RNA(n+1) + diphosphate. In terms of biological role, promotes RNA polymerase assembly. Latches the N- and C-terminal regions of the beta' subunit thereby facilitating its interaction with the beta and alpha subunits. The protein is DNA-directed RNA polymerase subunit omega of Caldanaerobacter subterraneus subsp. tengcongensis (strain DSM 15242 / JCM 11007 / NBRC 100824 / MB4) (Thermoanaerobacter tengcongensis).